An 81-amino-acid polypeptide reads, in one-letter code: Three-finger toxin 3FTx-Oxy6 (81 aa).

A signal peptide spans 1–21; it reads MKTLLLSLVVMTIVYLDLGYT. 4 disulfides stabilise this stretch: Cys24–Cys43, Cys36–Cys61, Cys65–Cys73, and Cys74–Cys79.

Belongs to the three-finger toxin family. Short-chain subfamily. In terms of tissue distribution, expressed by the venom gland.

It localises to the secreted. In Oxyuranus microlepidotus (Inland taipan), this protein is Three-finger toxin 3FTx-Oxy6.